We begin with the raw amino-acid sequence, 158 residues long: Probable deoxyuridine 5'-triphosphate nucleotidohydrolase (158 aa).

The protein belongs to the dUTPase family. The cofactor is Mg(2+).

The enzyme catalyses dUTP + H2O = dUMP + diphosphate + H(+). Its pathway is pyrimidine metabolism; dUMP biosynthesis; dUMP from dCTP (dUTP route): step 1/2. Its function is as follows. This enzyme is involved in nucleotide metabolism: it produces dUMP, the immediate precursor of thymidine nucleotides and it decreases the intracellular concentration of dUTP so that uracil cannot be incorporated into DNA. It does probably not deaminate dCTP. This is Probable deoxyuridine 5'-triphosphate nucleotidohydrolase from Sulfolobus islandicus rod-shaped virus 1 (SIRV-1).